The chain runs to 420 residues: Tyrosine--tRNA ligase (420 aa).

Tyr36 contributes to the L-tyrosine binding site. A 'HIGH' region motif is present at residues 41-50 (PTADSLHIGH). L-tyrosine is bound by residues Tyr170 and Gln174. Positions 231-235 (KFGKS) match the 'KMSKS' region motif. Lys234 lines the ATP pocket. Residues 353–420 (TNIVEVLIET…KKKYFMVNYQ (68 aa)) form the S4 RNA-binding domain.

Belongs to the class-I aminoacyl-tRNA synthetase family. TyrS type 1 subfamily. Homodimer.

It is found in the cytoplasm. The enzyme catalyses tRNA(Tyr) + L-tyrosine + ATP = L-tyrosyl-tRNA(Tyr) + AMP + diphosphate + H(+). In terms of biological role, catalyzes the attachment of tyrosine to tRNA(Tyr) in a two-step reaction: tyrosine is first activated by ATP to form Tyr-AMP and then transferred to the acceptor end of tRNA(Tyr). In Staphylococcus aureus (strain bovine RF122 / ET3-1), this protein is Tyrosine--tRNA ligase.